We begin with the raw amino-acid sequence, 163 residues long: Putative pre-16S rRNA nuclease (163 aa).

It belongs to the YqgF nuclease family.

The protein localises to the cytoplasm. In terms of biological role, could be a nuclease involved in processing of the 5'-end of pre-16S rRNA. The protein is Putative pre-16S rRNA nuclease of Rhodopseudomonas palustris (strain BisA53).